A 757-amino-acid chain; its full sequence is 5-methyltetrahydropteroyltriglutamate--homocysteine methyltransferase (757 aa).

5-methyltetrahydropteroyltri-L-glutamate is bound by residues 15–18 (RELK) and K114. Residues 428–430 (IGS) and E481 contribute to the L-homocysteine site. L-methionine is bound by residues 428 to 430 (IGS) and E481. 5-methyltetrahydropteroyltri-L-glutamate contacts are provided by residues 512–513 (RC) and W558. D596 serves as a coordination point for L-homocysteine. L-methionine is bound at residue D596. A 5-methyltetrahydropteroyltri-L-glutamate-binding site is contributed by E602. Positions 639, 641, and 663 each coordinate Zn(2+). H692 serves as the catalytic Proton donor. Residue C724 coordinates Zn(2+).

It belongs to the vitamin-B12 independent methionine synthase family. The cofactor is Zn(2+).

It catalyses the reaction 5-methyltetrahydropteroyltri-L-glutamate + L-homocysteine = tetrahydropteroyltri-L-glutamate + L-methionine. Its pathway is amino-acid biosynthesis; L-methionine biosynthesis via de novo pathway; L-methionine from L-homocysteine (MetE route): step 1/1. Functionally, catalyzes the transfer of a methyl group from 5-methyltetrahydrofolate to homocysteine resulting in methionine formation. The sequence is that of 5-methyltetrahydropteroyltriglutamate--homocysteine methyltransferase from Lactococcus lactis subsp. cremoris (strain SK11).